Consider the following 570-residue polypeptide: Urease subunit alpha (570 aa).

The Urease domain occupies 131–570 (GGFDSHIHFI…LPMAQRYFLF (440 aa)). Ni(2+) contacts are provided by histidine 136, histidine 138, and lysine 219. Residue lysine 219 is modified to N6-carboxylysine. Residue histidine 221 participates in substrate binding. Residues histidine 248 and histidine 274 each contribute to the Ni(2+) site. Histidine 322 acts as the Proton donor in catalysis. A Ni(2+)-binding site is contributed by aspartate 362.

It belongs to the metallo-dependent hydrolases superfamily. Urease alpha subunit family. In terms of assembly, heterotrimer of UreA (gamma), UreB (beta) and UreC (alpha) subunits. Three heterotrimers associate to form the active enzyme. It depends on Ni cation as a cofactor. Post-translationally, carboxylation allows a single lysine to coordinate two nickel ions.

The protein resides in the cytoplasm. It catalyses the reaction urea + 2 H2O + H(+) = hydrogencarbonate + 2 NH4(+). It functions in the pathway nitrogen metabolism; urea degradation; CO(2) and NH(3) from urea (urease route): step 1/1. The sequence is that of Urease subunit alpha from Beijerinckia indica subsp. indica (strain ATCC 9039 / DSM 1715 / NCIMB 8712).